The primary structure comprises 231 residues: UPF0758 protein aq_1610 (231 aa).

The MPN domain occupies 110–231 (SIRNPQEAFE…YFSFREEGVL (122 aa)). Zn(2+) contacts are provided by His180, His182, and Asp193. Positions 180–193 (HNHPQGEPSPSNED) match the JAMM motif motif.

It belongs to the UPF0758 family.

The chain is UPF0758 protein aq_1610 from Aquifex aeolicus (strain VF5).